The sequence spans 510 residues: NAD(P)H-quinone oxidoreductase subunit 2 B, chloroplastic (510 aa).

The next 13 helical transmembrane spans lie at 26 to 46 (LFDGSFIFPEGILIFGLILLL), 57 to 77 (IPWFYFISSISLVMSITALLF), 99 to 119 (IFQFLILLCSTLCIPLSVEYI), 124 to 144 (MAITEFLLFVLTATLGGMFLC), 149 to 169 (LITIFVAPECFSLCSYLLSGY), 183 to 203 (YLLMGGASSSILVHGFSWLYG), 227 to 247 (PGISIALIFITVGIGFKLSPA), 295 to 315 (WHPLLEILAILSMILGNLIAI), 323 to 342 (MLAYSSIGQIGYVIIGIIVG), 354 to 374 (YMLFYISMNLGTFACIVLFGL), 395 to 415 (ALSLALCLLSLGGLPPLAGFF), 418 to 438 (LHLFWCGWQAGLYFLVSIGLF), and 484 to 504 (MIVCVIASTIPGISMNPIIAI).

Belongs to the complex I subunit 2 family. In terms of assembly, NDH is composed of at least 16 different subunits, 5 of which are encoded in the nucleus.

It is found in the plastid. It localises to the chloroplast thylakoid membrane. It catalyses the reaction a plastoquinone + NADH + (n+1) H(+)(in) = a plastoquinol + NAD(+) + n H(+)(out). It carries out the reaction a plastoquinone + NADPH + (n+1) H(+)(in) = a plastoquinol + NADP(+) + n H(+)(out). In terms of biological role, NDH shuttles electrons from NAD(P)H:plastoquinone, via FMN and iron-sulfur (Fe-S) centers, to quinones in the photosynthetic chain and possibly in a chloroplast respiratory chain. The immediate electron acceptor for the enzyme in this species is believed to be plastoquinone. Couples the redox reaction to proton translocation, and thus conserves the redox energy in a proton gradient. The protein is NAD(P)H-quinone oxidoreductase subunit 2 B, chloroplastic of Oenothera argillicola (Appalachian evening primrose).